Here is a 169-residue protein sequence, read N- to C-terminus: Gamma-crystallin 2 (169 aa).

2 consecutive Beta/gamma crystallin 'Greek key' domains span residues 1–34 (YEDR…KVDS) and 35–77 (GCWM…KVIP). Residues 78-82 (QQKGP) are connecting peptide. 2 consecutive Beta/gamma crystallin 'Greek key' domains span residues 83-123 (HKMK…NVLE) and 124-166 (GHWI…RRVL).

The protein belongs to the beta/gamma-crystallin family. As to quaternary structure, monomer.

Its function is as follows. Crystallins are the dominant structural components of the vertebrate eye lens. In Rana temporaria (European common frog), this protein is Gamma-crystallin 2.